The chain runs to 236 residues: Probable calcium-binding protein CML30 (236 aa).

A disordered region spans residues 43–64; sequence VVVVAKKRPEEEPRRPDPDADL. The span at 49–60 shows a compositional bias: basic and acidic residues; sequence KRPEEEPRRPDP. 2 EF-hand domains span residues 59-94 and 96-131; these read DPDADLGIVFSTFDHDGDGFITAAELEESLKRLGIA and SSAAEAAALVARVDANSDGLIDIHEFRELYDSIPKR. Residues D72, D74, D76, E83, D109, N111, D113, and E120 each coordinate Ca(2+). Residues 130-158 are disordered; the sequence is KRRKSHQQHPLPSTAAADEEAAAADEEYE. Positions 146-158 are enriched in acidic residues; the sequence is ADEEAAAADEEYE. 2 EF-hand domains span residues 161–196 and 202–236; these read EEERDLREAFDVFDGNKDGLISAEELGTVLESLGLR and PAVAECRDMIRLVDSDGDGMVSFEEFKRMMTVVKA. Residues D174, N176, D178, E185, D215, D217, D219, M221, and E226 each coordinate Ca(2+).

Functionally, potential calcium sensor. The sequence is that of Probable calcium-binding protein CML30 (CML30) from Oryza sativa subsp. japonica (Rice).